A 344-amino-acid chain; its full sequence is Ferrochelatase (344 aa).

Fe cation contacts are provided by H214 and E295.

The protein belongs to the ferrochelatase family.

It is found in the cytoplasm. The catalysed reaction is heme b + 2 H(+) = protoporphyrin IX + Fe(2+). It functions in the pathway porphyrin-containing compound metabolism; protoheme biosynthesis; protoheme from protoporphyrin-IX: step 1/1. In terms of biological role, catalyzes the ferrous insertion into protoporphyrin IX. The protein is Ferrochelatase of Rhizobium leguminosarum bv. trifolii (strain WSM2304).